A 348-amino-acid polypeptide reads, in one-letter code: Holliday junction branch migration complex subunit RuvB (348 aa).

The large ATPase domain (RuvB-L) stretch occupies residues 4 to 184 (ADRLIAASGR…FGIVQRLEFY (181 aa)). ATP is bound by residues isoleucine 23, arginine 24, glycine 65, lysine 68, threonine 69, threonine 70, 131–133 (EDF), arginine 174, tyrosine 184, and arginine 221. Residue threonine 69 participates in Mg(2+) binding. Residues 185 to 255 (SDKDLATIVS…VADLALNLLD (71 aa)) form a small ATPAse domain (RuvB-S) region. A head domain (RuvB-H) region spans residues 258-348 (ERGFDHSDRR…GADFSEAGDE (91 aa)). The DNA site is built by arginine 294, arginine 313, and arginine 318.

This sequence belongs to the RuvB family. In terms of assembly, homohexamer. Forms an RuvA(8)-RuvB(12)-Holliday junction (HJ) complex. HJ DNA is sandwiched between 2 RuvA tetramers; dsDNA enters through RuvA and exits via RuvB. An RuvB hexamer assembles on each DNA strand where it exits the tetramer. Each RuvB hexamer is contacted by two RuvA subunits (via domain III) on 2 adjacent RuvB subunits; this complex drives branch migration. In the full resolvosome a probable DNA-RuvA(4)-RuvB(12)-RuvC(2) complex forms which resolves the HJ.

It is found in the cytoplasm. It catalyses the reaction ATP + H2O = ADP + phosphate + H(+). Its function is as follows. The RuvA-RuvB-RuvC complex processes Holliday junction (HJ) DNA during genetic recombination and DNA repair, while the RuvA-RuvB complex plays an important role in the rescue of blocked DNA replication forks via replication fork reversal (RFR). RuvA specifically binds to HJ cruciform DNA, conferring on it an open structure. The RuvB hexamer acts as an ATP-dependent pump, pulling dsDNA into and through the RuvAB complex. RuvB forms 2 homohexamers on either side of HJ DNA bound by 1 or 2 RuvA tetramers; 4 subunits per hexamer contact DNA at a time. Coordinated motions by a converter formed by DNA-disengaged RuvB subunits stimulates ATP hydrolysis and nucleotide exchange. Immobilization of the converter enables RuvB to convert the ATP-contained energy into a lever motion, pulling 2 nucleotides of DNA out of the RuvA tetramer per ATP hydrolyzed, thus driving DNA branch migration. The RuvB motors rotate together with the DNA substrate, which together with the progressing nucleotide cycle form the mechanistic basis for DNA recombination by continuous HJ branch migration. Branch migration allows RuvC to scan DNA until it finds its consensus sequence, where it cleaves and resolves cruciform DNA. The polypeptide is Holliday junction branch migration complex subunit RuvB (Pseudomonas putida (strain W619)).